A 195-amino-acid chain; its full sequence is Pyridoxal 5'-phosphate synthase subunit PdxT (195 aa).

46–48 (GES) is an L-glutamine binding site. C78 functions as the Nucleophile in the catalytic mechanism. L-glutamine contacts are provided by residues R106 and 134–135 (IR). Residues H170 and E172 each act as charge relay system in the active site.

This sequence belongs to the glutaminase PdxT/SNO family. In terms of assembly, in the presence of PdxS, forms a dodecamer of heterodimers. Only shows activity in the heterodimer.

The enzyme catalyses aldehydo-D-ribose 5-phosphate + D-glyceraldehyde 3-phosphate + L-glutamine = pyridoxal 5'-phosphate + L-glutamate + phosphate + 3 H2O + H(+). It carries out the reaction L-glutamine + H2O = L-glutamate + NH4(+). It participates in cofactor biosynthesis; pyridoxal 5'-phosphate biosynthesis. Its function is as follows. Catalyzes the hydrolysis of glutamine to glutamate and ammonia as part of the biosynthesis of pyridoxal 5'-phosphate. The resulting ammonia molecule is channeled to the active site of PdxS. The chain is Pyridoxal 5'-phosphate synthase subunit PdxT from Pseudothermotoga lettingae (strain ATCC BAA-301 / DSM 14385 / NBRC 107922 / TMO) (Thermotoga lettingae).